The primary structure comprises 289 residues: Pteridine reductase 1 (289 aa).

Position 14-41 (14-41) interacts with NADP(+); that stretch reads GAAKRLGSSIAEALHAEGYTVCLHYHRS. A substrate-binding site is contributed by Ser176. The active-site Proton acceptor is Tyr195. 195-199 serves as a coordination point for NADP(+); that stretch reads YTMAK.

Belongs to the short-chain dehydrogenases/reductases (SDR) family. In terms of assembly, homotetramer.

The enzyme catalyses (6R)-L-erythro-5,6,7,8-tetrahydrobiopterin + 2 NADP(+) = L-erythro-biopterin + 2 NADPH + 2 H(+). It functions in the pathway cofactor biosynthesis; tetrahydrobiopterin biosynthesis; tetrahydrobiopterin from biopterin: step 1/1. Functionally, exhibits a NADPH-dependent biopterin reductase activity. Has good activity with folate and significant activity with dihydrofolate and dihydrobiopterin, but not with quinonoid dihydrobiopterin. Confers resistance to methotrexate (MTX). The protein is Pteridine reductase 1 (PTR1) of Leishmania tarentolae (Sauroleishmania tarentolae).